A 343-amino-acid polypeptide reads, in one-letter code: S-adenosylmethionine:tRNA ribosyltransferase-isomerase (343 aa).

It belongs to the QueA family. In terms of assembly, monomer.

The protein localises to the cytoplasm. The enzyme catalyses 7-aminomethyl-7-carbaguanosine(34) in tRNA + S-adenosyl-L-methionine = epoxyqueuosine(34) in tRNA + adenine + L-methionine + 2 H(+). Its pathway is tRNA modification; tRNA-queuosine biosynthesis. In terms of biological role, transfers and isomerizes the ribose moiety from AdoMet to the 7-aminomethyl group of 7-deazaguanine (preQ1-tRNA) to give epoxyqueuosine (oQ-tRNA). This is S-adenosylmethionine:tRNA ribosyltransferase-isomerase from Hydrogenobaculum sp. (strain Y04AAS1).